The sequence spans 416 residues: Isobutyryl-CoA dehydrogenase, mitochondrial (416 aa).

A mitochondrion-targeting transit peptide spans 1–23 (MMLRGGCQRVGARLRGLRRGPRG). The residue at position 51 (K51) is an N6-acetyllysine; alternate. K51 carries the post-translational modification N6-succinyllysine; alternate. FAD-binding positions include 159–168 (YCLTEPGSGS) and 192–194 (FIS). S168 is a binding site for substrate. K232 is modified (N6-acetyllysine). The residue at position 272 (K272) is an N6-succinyllysine. 275-278 (NGGR) is a binding site for substrate. Residues R303, 313–314 (SQ), and 372–376 (QMHGG) contribute to the FAD site. The active-site Proton acceptor is E399. 401–403 (SNE) is an FAD binding site. Position 411 (R411) interacts with substrate.

This sequence belongs to the acyl-CoA dehydrogenase family. Homotetramer, formed by a dimer of dimers. The cofactor is FAD.

It is found in the mitochondrion. The catalysed reaction is 2-methylpropanoyl-CoA + oxidized [electron-transfer flavoprotein] + H(+) = 2-methylpropenoyl-CoA + reduced [electron-transfer flavoprotein]. The enzyme catalyses (2S)-2-methylbutanoyl-CoA + oxidized [electron-transfer flavoprotein] + H(+) = (2E)-2-methylbut-2-enoyl-CoA + reduced [electron-transfer flavoprotein]. It carries out the reaction propanoyl-CoA + oxidized [electron-transfer flavoprotein] + H(+) = acryloyl-CoA + reduced [electron-transfer flavoprotein]. It participates in amino-acid degradation; L-valine degradation. Isobutyryl-CoA dehydrogenase which catalyzes the conversion of 2-methylpropanoyl-CoA to (2E)-2-methylpropenoyl-CoA in the valine catabolic pathway. To a lesser extent, also able to catalyze the oxidation of (2S)-2-methylbutanoyl-CoA. In Bos taurus (Bovine), this protein is Isobutyryl-CoA dehydrogenase, mitochondrial (ACAD8).